The sequence spans 379 residues: Cytochrome b (379 aa).

4 helical membrane-spanning segments follow: residues 34–54, 78–99, 114–134, and 179–199; these read FGSLLGICLITQILTGLLLAM, WLIRNLHANGASFFFICIYLHI, WNTGVILLLTLMATAFVGYVL, and FFALHFLLPFLIAGITIIHLT. Heme b is bound by residues H84 and H98. The heme b site is built by H183 and H197. H202 is a binding site for a ubiquinone. The next 4 membrane-spanning stretches (helical) occupy residues 227–247, 289–309, 321–341, and 348–368; these read LKDILGFTLMFIPLLILAFFS, LGGVLALAASVLILFLIPFLH, LSQMLFWLLVANLLILTWIGS, and FIIIGQTASFTYFLILLILFP.

It belongs to the cytochrome b family. In terms of assembly, the cytochrome bc1 complex contains 11 subunits: 3 respiratory subunits (MT-CYB, CYC1 and UQCRFS1), 2 core proteins (UQCRC1 and UQCRC2) and 6 low-molecular weight proteins (UQCRH/QCR6, UQCRB/QCR7, UQCRQ/QCR8, UQCR10/QCR9, UQCR11/QCR10 and a cleavage product of UQCRFS1). This cytochrome bc1 complex then forms a dimer. It depends on heme b as a cofactor.

It is found in the mitochondrion inner membrane. Functionally, component of the ubiquinol-cytochrome c reductase complex (complex III or cytochrome b-c1 complex) that is part of the mitochondrial respiratory chain. The b-c1 complex mediates electron transfer from ubiquinol to cytochrome c. Contributes to the generation of a proton gradient across the mitochondrial membrane that is then used for ATP synthesis. This Dromaius novaehollandiae (Emu) protein is Cytochrome b (MT-CYB).